We begin with the raw amino-acid sequence, 224 residues long: MEKMRVIVITVFLFIGAAIAEDVGIGLLSEAEAYVSPKLKKFITPCTSHVGETCSTTSSSGSEALMQNQGGLALCLFDSMERCLVDHGAQLYQTSVTNLQVEPSEVFPRKNNPQGGRKSKLDDHQVQPLSFRLPPFRLPPMPKLGPTSPIIRTIPSPPIAPRDLSLIETIQLRTALRTCTHVTARTCLTAPNVATSDLEACLTPSMNQCIYPRGAEYGSPPIRA.

Residues 1-20 (MEKMRVIVITVFLFIGAAIA) form the signal peptide. The interval 103-124 (PSEVFPRKNNPQGGRKSKLDDH) is disordered.

The protein belongs to the nodulin 20 family.

In terms of biological role, involved in the infection process during the plant-rhizobium interaction. In Glycine max (Soybean), this protein is Nodulin-C51.